The sequence spans 285 residues: Glycine--tRNA ligase alpha subunit (285 aa).

The protein belongs to the class-II aminoacyl-tRNA synthetase family. Tetramer of two alpha and two beta subunits.

The protein localises to the cytoplasm. It catalyses the reaction tRNA(Gly) + glycine + ATP = glycyl-tRNA(Gly) + AMP + diphosphate. The protein is Glycine--tRNA ligase alpha subunit of Thermodesulfovibrio yellowstonii (strain ATCC 51303 / DSM 11347 / YP87).